A 282-amino-acid chain; its full sequence is Bis(5'-nucleosyl)-tetraphosphatase, symmetrical (282 aa).

The protein belongs to the Ap4A hydrolase family.

It carries out the reaction P(1),P(4)-bis(5'-adenosyl) tetraphosphate + H2O = 2 ADP + 2 H(+). Its function is as follows. Hydrolyzes diadenosine 5',5'''-P1,P4-tetraphosphate to yield ADP. This is Bis(5'-nucleosyl)-tetraphosphatase, symmetrical from Escherichia coli O127:H6 (strain E2348/69 / EPEC).